The sequence spans 251 residues: Ubiquinone biosynthesis O-methyltransferase (251 aa).

S-adenosyl-L-methionine contacts are provided by Arg-36, Gly-61, Asp-82, and Ile-124.

It belongs to the methyltransferase superfamily. UbiG/COQ3 family.

It carries out the reaction a 3-demethylubiquinol + S-adenosyl-L-methionine = a ubiquinol + S-adenosyl-L-homocysteine + H(+). The catalysed reaction is a 3-(all-trans-polyprenyl)benzene-1,2-diol + S-adenosyl-L-methionine = a 2-methoxy-6-(all-trans-polyprenyl)phenol + S-adenosyl-L-homocysteine + H(+). It participates in cofactor biosynthesis; ubiquinone biosynthesis. O-methyltransferase that catalyzes the 2 O-methylation steps in the ubiquinone biosynthetic pathway. The protein is Ubiquinone biosynthesis O-methyltransferase of Rickettsia akari (strain Hartford).